Here is a 547-residue protein sequence, read N- to C-terminus: Chaperonin GroEL 2 (547 aa).

ATP-binding positions include 30–33 (TLGP), K51, 87–91 (DGTTT), G415, 479–481 (NAA), and D495. Positions 526–547 (KEESAAPAGGGMGGMGGMGGMM) are disordered. Over residues 533–547 (AGGGMGGMGGMGGMM) the composition is skewed to gly residues.

It belongs to the chaperonin (HSP60) family. Forms a cylinder of 14 subunits composed of two heptameric rings stacked back-to-back. Interacts with the co-chaperonin GroES.

The protein localises to the cytoplasm. It carries out the reaction ATP + H2O + a folded polypeptide = ADP + phosphate + an unfolded polypeptide.. Its function is as follows. Together with its co-chaperonin GroES, plays an essential role in assisting protein folding. The GroEL-GroES system forms a nano-cage that allows encapsulation of the non-native substrate proteins and provides a physical environment optimized to promote and accelerate protein folding. The protein is Chaperonin GroEL 2 of Anaeromyxobacter sp. (strain Fw109-5).